Reading from the N-terminus, the 480-residue chain is Protein nucleotidyltransferase YdiU (480 aa).

ATP-binding residues include G86, G88, R89, K109, D121, G122, R172, and R179. D248 acts as the Proton acceptor in catalysis. Mg(2+) contacts are provided by N249 and D258. D258 lines the ATP pocket.

It belongs to the SELO family. Requires Mg(2+) as cofactor. The cofactor is Mn(2+).

The enzyme catalyses L-seryl-[protein] + ATP = 3-O-(5'-adenylyl)-L-seryl-[protein] + diphosphate. It catalyses the reaction L-threonyl-[protein] + ATP = 3-O-(5'-adenylyl)-L-threonyl-[protein] + diphosphate. It carries out the reaction L-tyrosyl-[protein] + ATP = O-(5'-adenylyl)-L-tyrosyl-[protein] + diphosphate. The catalysed reaction is L-histidyl-[protein] + UTP = N(tele)-(5'-uridylyl)-L-histidyl-[protein] + diphosphate. The enzyme catalyses L-seryl-[protein] + UTP = O-(5'-uridylyl)-L-seryl-[protein] + diphosphate. It catalyses the reaction L-tyrosyl-[protein] + UTP = O-(5'-uridylyl)-L-tyrosyl-[protein] + diphosphate. In terms of biological role, nucleotidyltransferase involved in the post-translational modification of proteins. It can catalyze the addition of adenosine monophosphate (AMP) or uridine monophosphate (UMP) to a protein, resulting in modifications known as AMPylation and UMPylation. This chain is Protein nucleotidyltransferase YdiU, found in Salmonella paratyphi B (strain ATCC BAA-1250 / SPB7).